The following is a 38-amino-acid chain: Photosystem II reaction center protein X (38 aa).

The helical transmembrane segment at 9–29 threads the bilayer; that stretch reads ISSLTAGGLVVLTIAVALIVI.

The protein belongs to the PsbX family. Type 1 subfamily. In terms of assembly, PSII is composed of 1 copy each of membrane proteins PsbA, PsbB, PsbC, PsbD, PsbE, PsbF, PsbH, PsbI, PsbJ, PsbK, PsbL, PsbM, PsbT, PsbX, PsbY, PsbZ, Psb30/Ycf12, at least 3 peripheral proteins of the oxygen-evolving complex and a large number of cofactors. It forms dimeric complexes.

The protein localises to the plastid. Its subcellular location is the chloroplast thylakoid membrane. Functionally, involved in the binding and/or turnover of quinones at the Q(B) site of photosystem II (PSII). PSII is a light-driven water plastoquinone oxidoreductase, using light energy to abstract electrons from H(2)O, generating a proton gradient subsequently used for ATP formation. This is Photosystem II reaction center protein X from Trieres chinensis (Marine centric diatom).